Here is a 461-residue protein sequence, read N- to C-terminus: Putative aldehyde dehydrogenase FUS7 (461 aa).

An NAD(+)-binding site is contributed by 220-225 (GSTATG). Residues glutamate 242 and cysteine 276 contribute to the active site.

It belongs to the aldehyde dehydrogenase family.

The enzyme catalyses an aldehyde + NAD(+) + H2O = a carboxylate + NADH + 2 H(+). Its function is as follows. Putative aldehyde dehydrogenase; part of the gene cluster that mediates the biosynthesis of the mycotoxin fusarin C. Within the cluster, FUS1, FUS2, FUS8 and FUS9 are sufficient for fusarin production. The other FUS cluster members are not essential for fusarin C biosynthesis. This is Putative aldehyde dehydrogenase FUS7 from Gibberella moniliformis (strain M3125 / FGSC 7600) (Maize ear and stalk rot fungus).